A 557-amino-acid polypeptide reads, in one-letter code: Formate--tetrahydrofolate ligase 1 (557 aa).

Residue 66–73 (TPAGEGKT) coordinates ATP.

This sequence belongs to the formate--tetrahydrofolate ligase family.

It catalyses the reaction (6S)-5,6,7,8-tetrahydrofolate + formate + ATP = (6R)-10-formyltetrahydrofolate + ADP + phosphate. It functions in the pathway one-carbon metabolism; tetrahydrofolate interconversion. In Streptococcus sanguinis (strain SK36), this protein is Formate--tetrahydrofolate ligase 1.